The chain runs to 166 residues: Cyanate hydratase (166 aa).

Catalysis depends on residues arginine 92, glutamate 95, and serine 118.

This sequence belongs to the cyanase family.

The enzyme catalyses cyanate + hydrogencarbonate + 3 H(+) = NH4(+) + 2 CO2. Catalyzes the reaction of cyanate with bicarbonate to produce ammonia and carbon dioxide. This is Cyanate hydratase from Zea mays (Maize).